Here is an 84-residue protein sequence, read N- to C-terminus: UPF0386 protein R01313 (84 aa).

The protein belongs to the UPF0386 family.

The protein is UPF0386 protein R01313 of Rhizobium meliloti (strain 1021) (Ensifer meliloti).